The sequence spans 377 residues: SH2/SH3 adapter protein NCK1 (377 aa).

Position 2 is an N-acetylalanine (Ala2). An SH3 1 domain is found at 2 to 61 (AEEVVVVAKFDYVAQQEQELDIKKNERLWLLDDSKSWWRVRNSMNKTGFVPSNYVERKNS). 4 positions are modified to phosphoserine: Ser85, Ser89, Ser91, and Ser96. Tyr105 carries the post-translational modification Phosphotyrosine. An SH3 2 domain is found at 106–165 (DLNMPAYVKFNYMAEREDELSLIKGTKVIVMEKCSDGWWRGSYNGQVGWFPSNYVTEEGD). Ser166 carries the post-translational modification Phosphoserine. Residues 190–252 (QVLHVVQALY…PKNYVTVMQN (63 aa)) form the SH3 3 domain. The SH2 domain maps to 282-376 (WYYGKVTRHQ…GEKLYLVKHL (95 aa)).

Interacts (via SH2 domain and SH3 domain 2) with EGFR. Interacts with PAK1 and SOS1. Interacts (via SH3 domains) with PKN2. Associates with BLNK, PLCG1, VAV1 and NCK1 in a B-cell antigen receptor-dependent fashion. Interacts with SOCS7. This interaction is required for nuclear import. Part of a complex containing PPP1R15B, PP1 and NCK1. Interacts with RALGPS1. Interacts with CAV2 (tyrosine phosphorylated form). Interacts with ADAM15. Interacts with FASLG. Directly interacts with RASA1. Interacts with isoform 4 of MINK1. Interacts with FLT1 (tyrosine phosphorylated). Interacts with KDR (tyrosine phosphorylated). Interacts (via SH2 domain) with EPHB1; activates the JUN cascade to regulate cell adhesion. Interacts with EPHA2. Interacts (via SH2 domain) with PDGFRB (tyrosine phosphorylated). Interacts with the inactive form of EIF2AK2/PKR. Interacts with PTPN1. Interacts with INSR/insulin receptor (in response to insulin stimulation); This interaction may mediate PTPN1 recruitment leading to INSR dephosphorylation. Interacts with IRS1. In terms of processing, phosphorylated on Ser and Tyr residues. Phosphorylated in response to activation of EGFR and FcERI. Phosphorylated by activated PDGFRB.

The protein resides in the cytoplasm. The protein localises to the endoplasmic reticulum. Its subcellular location is the nucleus. Its function is as follows. Adapter protein which associates with tyrosine-phosphorylated growth factor receptors, such as KDR and PDGFRB, or their cellular substrates. Maintains low levels of EIF2S1 phosphorylation by promoting its dephosphorylation by PP1. Plays a role in the DNA damage response, not in the detection of the damage by ATM/ATR, but for efficient activation of downstream effectors, such as that of CHEK2. Plays a role in ELK1-dependent transcriptional activation in response to activated Ras signaling. Modulates the activation of EIF2AK2/PKR by dsRNA. May play a role in cell adhesion and migration through interaction with ephrin receptors. This Homo sapiens (Human) protein is SH2/SH3 adapter protein NCK1 (NCK1).